Reading from the N-terminus, the 213-residue chain is Glutathione S-transferase PARB (213 aa).

Positions 1 to 82 constitute a GST N-terminal domain; the sequence is MAIKVHGSPM…YIAHVYADNG (82 aa). Glutathione contacts are provided by residues serine 11, 12–13, 40–41, 53–54, and 66–67; these read TA, HK, QV, and ES. One can recognise a GST C-terminal domain in the interval 89–213; that stretch reads DPKKMPSMSV…WVKGLEKLQK (125 aa).

Belongs to the GST superfamily. Phi family.

It carries out the reaction RX + glutathione = an S-substituted glutathione + a halide anion + H(+). Conjugation of reduced glutathione to a wide number of exogenous and endogenous hydrophobic electrophiles. This chain is Glutathione S-transferase PARB, found in Nicotiana tabacum (Common tobacco).